We begin with the raw amino-acid sequence, 488 residues long: 3-octaprenyl-4-hydroxybenzoate carboxy-lyase (488 aa).

A Mn(2+)-binding site is contributed by N172. Prenylated FMN-binding positions include 175-177 (IYR), 189-191 (RWL), and 194-195 (RG). Residue E238 coordinates Mn(2+). The active-site Proton donor is D287.

This sequence belongs to the UbiD family. In terms of assembly, homohexamer. It depends on prenylated FMN as a cofactor. The cofactor is Mn(2+).

It localises to the cell membrane. It carries out the reaction a 4-hydroxy-3-(all-trans-polyprenyl)benzoate + H(+) = a 2-(all-trans-polyprenyl)phenol + CO2. Its pathway is cofactor biosynthesis; ubiquinone biosynthesis. Its function is as follows. Catalyzes the decarboxylation of 3-octaprenyl-4-hydroxy benzoate to 2-octaprenylphenol, an intermediate step in ubiquinone biosynthesis. The chain is 3-octaprenyl-4-hydroxybenzoate carboxy-lyase from Pseudomonas fluorescens (strain ATCC BAA-477 / NRRL B-23932 / Pf-5).